We begin with the raw amino-acid sequence, 48 residues long: Large ribosomal subunit protein bL33A (48 aa).

It belongs to the bacterial ribosomal protein bL33 family.

The chain is Large ribosomal subunit protein bL33A from Bacillus anthracis.